Reading from the N-terminus, the 421-residue chain is Core protease I7 homolog (421 aa).

Catalysis depends on residues His-242, Asp-249, and Cys-329.

The protein belongs to the peptidase C57 family.

The protein resides in the virion. Its function is as follows. Late protein responsible for processing most or all of the viral core and membrane proteins known to undergo morphogenesis-associated proteolysis. These proteolytic events are involved in the transformation of immature virions (IV) into mature virions (MV). The sequence is that of Core protease I7 homolog from Fowlpox virus (strain NVSL) (FPV).